The sequence spans 288 residues: Ankyrin repeat and SOCS box protein 8 (288 aa).

Residue S17 is modified to Phosphoserine. ANK repeat units follow at residues 52-81, 85-113, 117-146, and 150-179; these read GTLK…EVNA, YNRT…NPNA, NRDT…SVNA, and NNDT…EVRV. Residues 235–288 enclose the SOCS box domain; it reads QLCEKLTVLCSAPGTLKTLSRYAVRRSLGLQYLPDAVKGLPLPASLKEYLLLIE.

It belongs to the ankyrin SOCS box (ASB) family. Interacts with TBK1; this interaction promotes TBK1 proteasomal degradation. In terms of processing, phosphorylated by TBK1.

The protein localises to the cytoplasm. The protein operates within protein modification; protein ubiquitination. In terms of biological role, may be a substrate-recognition component of a SCF-like ECS (Elongin-Cullin-SOCS-box protein) E3 ubiquitin-protein ligase complex which mediates the ubiquitination and subsequent proteasomal degradation of target proteins. Inhibits IFN-beta production through the IRF3 signaling pathway by targeting TBK1 via 'Lys-48'-linked ubiquitination, leading to its proteasomal degradation. The protein is Ankyrin repeat and SOCS box protein 8 (ASB8) of Bos taurus (Bovine).